The sequence spans 462 residues: Putative ABC transporter A445L (462 aa).

Belongs to the protein kinase superfamily. ADCK protein kinase family.

This is Putative ABC transporter A445L from Chlorella (PBCV-1).